Reading from the N-terminus, the 279-residue chain is S-methyl-5'-thioadenosine phosphorylase (279 aa).

Residues serine 28, 70 to 71 (RH), and 103 to 104 (SA) each bind phosphate. Substrate is bound at residue methionine 202. Threonine 203 contributes to the phosphate binding site. 226 to 228 (DYD) is a binding site for substrate.

The protein belongs to the PNP/MTAP phosphorylase family. MTAP subfamily. As to quaternary structure, homohexamer. Dimer of a homotrimer.

The enzyme catalyses S-methyl-5'-thioadenosine + phosphate = 5-(methylsulfanyl)-alpha-D-ribose 1-phosphate + adenine. It functions in the pathway amino-acid biosynthesis; L-methionine biosynthesis via salvage pathway; S-methyl-5-thio-alpha-D-ribose 1-phosphate from S-methyl-5'-thioadenosine (phosphorylase route): step 1/1. Its function is as follows. Catalyzes the reversible phosphorylation of S-methyl-5'-thioadenosine (MTA) to adenine and 5-methylthioribose-1-phosphate. Involved in the breakdown of MTA, a major by-product of polyamine biosynthesis. Responsible for the first step in the methionine salvage pathway after MTA has been generated from S-adenosylmethionine. Has broad substrate specificity with 6-aminopurine nucleosides as preferred substrates. This Pyrobaculum aerophilum (strain ATCC 51768 / DSM 7523 / JCM 9630 / CIP 104966 / NBRC 100827 / IM2) protein is S-methyl-5'-thioadenosine phosphorylase.